The primary structure comprises 354 residues: Ferrochelatase (354 aa).

Residues H214 and E295 each contribute to the Fe cation site.

It belongs to the ferrochelatase family.

It is found in the cytoplasm. It catalyses the reaction heme b + 2 H(+) = protoporphyrin IX + Fe(2+). It functions in the pathway porphyrin-containing compound metabolism; protoheme biosynthesis; protoheme from protoporphyrin-IX: step 1/1. In terms of biological role, catalyzes the ferrous insertion into protoporphyrin IX. In Burkholderia vietnamiensis (strain G4 / LMG 22486) (Burkholderia cepacia (strain R1808)), this protein is Ferrochelatase.